The primary structure comprises 493 residues: Glutamyl-tRNA(Gln) amidotransferase subunit A (493 aa).

Residues Lys79 and Ser159 each act as charge relay system in the active site. Ser183 (acyl-ester intermediate) is an active-site residue.

It belongs to the amidase family. GatA subfamily. As to quaternary structure, heterotrimer of A, B and C subunits.

The catalysed reaction is L-glutamyl-tRNA(Gln) + L-glutamine + ATP + H2O = L-glutaminyl-tRNA(Gln) + L-glutamate + ADP + phosphate + H(+). Its function is as follows. Allows the formation of correctly charged Gln-tRNA(Gln) through the transamidation of misacylated Glu-tRNA(Gln) in organisms which lack glutaminyl-tRNA synthetase. The reaction takes place in the presence of glutamine and ATP through an activated gamma-phospho-Glu-tRNA(Gln). This is Glutamyl-tRNA(Gln) amidotransferase subunit A from Allorhizobium ampelinum (strain ATCC BAA-846 / DSM 112012 / S4) (Agrobacterium vitis (strain S4)).